A 365-amino-acid chain; its full sequence is Peptide chain release factor 2 (365 aa).

Gln-252 bears the N5-methylglutamine mark.

The protein belongs to the prokaryotic/mitochondrial release factor family. In terms of processing, methylated by PrmC. Methylation increases the termination efficiency of RF2.

It localises to the cytoplasm. Peptide chain release factor 2 directs the termination of translation in response to the peptide chain termination codons UGA and UAA. The polypeptide is Peptide chain release factor 2 (Escherichia coli (strain K12 / MC4100 / BW2952)).